The sequence spans 173 residues: Crossover junction endodeoxyribonuclease RuvC (173 aa).

Catalysis depends on residues Asp8, Glu67, and Asp139. Mg(2+) is bound by residues Asp8, Glu67, and Asp139.

The protein belongs to the RuvC family. Homodimer which binds Holliday junction (HJ) DNA. The HJ becomes 2-fold symmetrical on binding to RuvC with unstacked arms; it has a different conformation from HJ DNA in complex with RuvA. In the full resolvosome a probable DNA-RuvA(4)-RuvB(12)-RuvC(2) complex forms which resolves the HJ. The cofactor is Mg(2+).

It is found in the cytoplasm. It carries out the reaction Endonucleolytic cleavage at a junction such as a reciprocal single-stranded crossover between two homologous DNA duplexes (Holliday junction).. In terms of biological role, the RuvA-RuvB-RuvC complex processes Holliday junction (HJ) DNA during genetic recombination and DNA repair. Endonuclease that resolves HJ intermediates. Cleaves cruciform DNA by making single-stranded nicks across the HJ at symmetrical positions within the homologous arms, yielding a 5'-phosphate and a 3'-hydroxyl group; requires a central core of homology in the junction. The consensus cleavage sequence is 5'-(A/T)TT(C/G)-3'. Cleavage occurs on the 3'-side of the TT dinucleotide at the point of strand exchange. HJ branch migration catalyzed by RuvA-RuvB allows RuvC to scan DNA until it finds its consensus sequence, where it cleaves and resolves the cruciform DNA. The chain is Crossover junction endodeoxyribonuclease RuvC from Erwinia tasmaniensis (strain DSM 17950 / CFBP 7177 / CIP 109463 / NCPPB 4357 / Et1/99).